A 412-amino-acid polypeptide reads, in one-letter code: Lysosomal phospholipase A and acyltransferase (412 aa).

The first 33 residues, 1–33 (MGLHLRPYRVGLLPDGLLFLLLLLMLLADPALP), serve as a signal peptide directing secretion. Position 46 (D46) interacts with substrate. A disulfide bridge connects residues C65 and C89. Residue N99 is glycosylated (N-linked (GlcNAc...) asparagine). Residue S198 is the Acyl-ester intermediate of the active site. A Zn(2+)-binding site is contributed by S198. Residue M199 participates in substrate binding. N-linked (GlcNAc...) asparagine glycosylation is found at N273 and N289. Residues D340 and C355 each contribute to the Zn(2+) site. Active-site charge relay system residues include D360 and H392. H392 contributes to the Zn(2+) binding site. N-linked (GlcNAc...) asparagine glycosylation is present at N398.

This sequence belongs to the AB hydrolase superfamily. Lipase family. In terms of processing, N-glycosylated. N-glycosylation is important for maturation of the enzyme and normal subcellular location. Detected in blood plasma (at protein level). Ubiquitous. Highly expressed in heart, placenta, skeletal muscle, kidney and pancreas. Detected at lower levels in spleen, thymus, prostate, testis, ovary, small intestine, colon and peripheral blood leukocytes.

It localises to the lysosome. Its subcellular location is the secreted. It is found in the membrane. The enzyme catalyses a 1,2-diacyl-sn-glycero-3-phosphocholine + H2O = a 2-acyl-sn-glycero-3-phosphocholine + a fatty acid + H(+). It carries out the reaction 1-hexadecanoyl-2-(9Z-octadecenoyl)-sn-glycero-3-phosphocholine + H2O = 2-(9Z-octadecenoyl)-sn-glycero-3-phosphocholine + hexadecanoate + H(+). It catalyses the reaction 1-hexadecanoyl-2-glutaroyl-sn-glycero-3-phosphocholine + H2O = 2-glutaroyl-sn-glycero-3-phosphocholine + hexadecanoate + H(+). The catalysed reaction is 1-hexadecanoyl-2-nonadioyl-sn-glycero-3-phosphocholine + H2O = 2-nonadioyl-sn-glycero-3-phosphocholine + hexadecanoate + H(+). The enzyme catalyses 1-hexadecanoyl-2-(5-oxopentanoyl)-sn-glycero-3-phosphocholine + H2O = 2-(5-oxopentanoyl)-sn-glycero-3-phosphocholine + hexadecanoate + H(+). It carries out the reaction 1-hexadecanoyl-2-(9-oxononanoyl)-sn-glycero-3-phosphocholine + H2O = 2-(9-oxononanoyl)-sn-glycero-3-phosphocholine + hexadecanoate + H(+). It catalyses the reaction 1,2-dihexadecanoyl-sn-glycero-3-phosphocholine + H2O = 2-hexadecanoyl-sn-glycero-3-phosphocholine + hexadecanoate + H(+). The catalysed reaction is a 1,2-diacyl-sn-glycero-3-phosphocholine + H2O = a 1-acyl-sn-glycero-3-phosphocholine + a fatty acid + H(+). The enzyme catalyses 1,2-di-(9Z-octadecenoyl)-sn-glycero-3-phosphocholine + H2O = 1-(9Z-octadecenoyl)-sn-glycero-3-phosphocholine + (9Z)-octadecenoate + H(+). It carries out the reaction 1-hexadecanoyl-2-(9Z-octadecenoyl)-sn-glycero-3-phosphocholine + H2O = 1-hexadecanoyl-sn-glycero-3-phosphocholine + (9Z)-octadecenoate + H(+). It catalyses the reaction 1,2-dihexadecanoyl-sn-glycero-3-phosphocholine + H2O = 1-hexadecanoyl-sn-glycero-3-phosphocholine + hexadecanoate + H(+). The catalysed reaction is a 1-acyl-sn-glycero-3-phosphocholine + H2O = sn-glycerol 3-phosphocholine + a fatty acid + H(+). The enzyme catalyses 1-hexadecanoyl-sn-glycero-3-phosphocholine + H2O = sn-glycerol 3-phosphocholine + hexadecanoate + H(+). It carries out the reaction N-(acetyl)-sphing-4-enine + a 1,2-diacyl-sn-glycero-3-phosphoethanolamine = 1-O-acyl-N-(acetyl)-sphing-4-enine + a 2-acyl-sn-glycero-3-phosphoethanolamine. It catalyses the reaction 1-hexadecanoyl-2-(9Z-octadecenoyl)-sn-glycero-3-phosphoethanolamine + N-(acetyl)-sphing-4-enine = 2-(9Z-octadecenoyl)-sn-glycero-3-phosphoethanolamine + 1-hexadecanoyl-N-(acetyl)-sphing-4-enine. The catalysed reaction is 1-hexadecanoyl-2-(9Z,12Z-octadecadienoyl)-sn-glycero-3-phosphoethanolamine + N-(acetyl)-sphing-4-enine = 2-(9Z,12Z)-octadecadienoyl-sn-glycero-3-phosphoethanolamine + 1-hexadecanoyl-N-(acetyl)-sphing-4-enine. The enzyme catalyses 1-hexadecanoyl-2-(5Z,8Z,11Z,14Z-eicosatetraenoyl)-sn-glycero-3-phosphoethanolamine + N-(acetyl)-sphing-4-enine = 2-(5Z,8Z,11Z,14Z)-eicosatetraenoyl-sn-glycero-3-phosphoethanolamine + 1-hexadecanoyl-N-(acetyl)-sphing-4-enine. It carries out the reaction N-(acetyl)-sphing-4-enine + a 1,2-diacyl-sn-glycero-3-phosphoethanolamine = 1-O-acyl-N-(acetyl)-sphing-4-enine + a 1-acyl-sn-glycero-3-phosphoethanolamine. It catalyses the reaction 1-hexadecanoyl-2-(9Z-octadecenoyl)-sn-glycero-3-phosphoethanolamine + N-(acetyl)-sphing-4-enine = 1-(9Z-octadecenoyl)-N-(acetyl)-sphing-4-enine + 1-hexadecanoyl-sn-glycero-3-phosphoethanolamine. The catalysed reaction is 1-hexadecanoyl-2-(9Z,12Z-octadecadienoyl)-sn-glycero-3-phosphoethanolamine + N-(acetyl)-sphing-4-enine = 1-(9Z,12Z-octadecadienoyl)-N-acetylsphing-4-enine + 1-hexadecanoyl-sn-glycero-3-phosphoethanolamine. The enzyme catalyses 1-hexadecanoyl-2-(5Z,8Z,11Z,14Z-eicosatetraenoyl)-sn-glycero-3-phosphoethanolamine + N-(acetyl)-sphing-4-enine = 1-(5Z,8Z,11Z,14Z)-eicosatetraenoyl-N-(acetyl)-sphing-4-enine + 1-hexadecanoyl-sn-glycero-3-phosphoethanolamine. It carries out the reaction N-(acetyl)-sphing-4-enine + a 1,2-diacyl-sn-glycero-3-phosphocholine = 1-O-acyl-N-(acetyl)-sphing-4-enine + a 1-acyl-sn-glycero-3-phosphocholine. It catalyses the reaction 1-hexadecanoyl-2-(9Z-octadecenoyl)-sn-glycero-3-phosphocholine + N-(acetyl)-sphing-4-enine = 1-(9Z-octadecenoyl)-N-(acetyl)-sphing-4-enine + 1-hexadecanoyl-sn-glycero-3-phosphocholine. The catalysed reaction is 1-hexadecanoyl-2-(9Z,12Z-octadecadienoyl)-sn-glycero-3-phosphocholine + N-(acetyl)-sphing-4-enine = 1-(9Z,12Z-octadecadienoyl)-N-acetylsphing-4-enine + 1-hexadecanoyl-sn-glycero-3-phosphocholine. The enzyme catalyses 1-hexadecanoyl-2-(5Z,8Z,11Z,14Z-eicosatetraenoyl)-sn-glycero-3-phosphocholine + N-(acetyl)-sphing-4-enine = 1-(5Z,8Z,11Z,14Z)-eicosatetraenoyl-N-(acetyl)-sphing-4-enine + 1-hexadecanoyl-sn-glycero-3-phosphocholine. It carries out the reaction 1-hexadecanoyl-2-(4Z,7Z,10Z,13Z,16Z,19Z-docosahexaenoyl)-sn-glycero-3-phosphocholine + N-(acetyl)-sphing-4-enine = 1-(4Z,7Z,10Z,13Z,16Z,19Z-docosahexaenoyl)-N-(acetyl)-sphing-4-enine + 1-hexadecanoyl-sn-glycero-3-phosphocholine. It catalyses the reaction 1-octadecanoyl-2-(9Z-octadecenoyl)-sn-glycero-3-phosphocholine + N-(acetyl)-sphing-4-enine = 1-(9Z-octadecenoyl)-N-(acetyl)-sphing-4-enine + 1-octadecanoyl-sn-glycero-3-phosphocholine. The catalysed reaction is 1-octadecanoyl-2-(9Z,12Z)-octadecadienoyl-sn-glycero-3-phosphocholine + N-(acetyl)-sphing-4-enine = 1-(9Z,12Z-octadecadienoyl)-N-acetylsphing-4-enine + 1-octadecanoyl-sn-glycero-3-phosphocholine. The enzyme catalyses 1-octadecanoyl-2-(5Z,8Z,11Z,14Z-eicosatetraenoyl)-sn-glycero-3-phosphocholine + N-(acetyl)-sphing-4-enine = 1-(5Z,8Z,11Z,14Z)-eicosatetraenoyl-N-(acetyl)-sphing-4-enine + 1-octadecanoyl-sn-glycero-3-phosphocholine. It carries out the reaction 1-(9Z-octadecenoyl)-2-hexadecanoyl-sn-glycero-3-phosphocholine + N-(acetyl)-sphing-4-enine = 1-hexadecanoyl-N-(acetyl)-sphing-4-enine + 1-(9Z-octadecenoyl)-sn-glycero-3-phosphocholine. It catalyses the reaction 1-(9Z)-octadecenoyl-2-octadecanoyl-sn-glycero-3-phosphocholine + N-(acetyl)-sphing-4-enine = 1-octadecanoyl-N-(acetyl)-sphing-4-enine + 1-(9Z-octadecenoyl)-sn-glycero-3-phosphocholine. The catalysed reaction is 1,2-di-(9Z-octadecenoyl)-sn-glycero-3-phosphocholine + N-(acetyl)-sphing-4-enine = 1-(9Z-octadecenoyl)-N-(acetyl)-sphing-4-enine + 1-(9Z-octadecenoyl)-sn-glycero-3-phosphocholine. The enzyme catalyses N-(acetyl)-sphing-4-enine + a 1,2-diacyl-sn-glycero-3-phosphocholine = 1-O-acyl-N-(acetyl)-sphing-4-enine + a 2-acyl-sn-glycero-3-phosphocholine. It carries out the reaction 1-hexadecanoyl-2-(9Z-octadecenoyl)-sn-glycero-3-phosphocholine + N-(acetyl)-sphing-4-enine = 1-hexadecanoyl-N-(acetyl)-sphing-4-enine + 2-(9Z-octadecenoyl)-sn-glycero-3-phosphocholine. It catalyses the reaction 1-hexadecanoyl-2-(9Z,12Z-octadecadienoyl)-sn-glycero-3-phosphocholine + N-(acetyl)-sphing-4-enine = 2-(9Z,12Z-octadecadienoyl)-sn-glycero-3-phosphocholine + 1-hexadecanoyl-N-(acetyl)-sphing-4-enine. The catalysed reaction is 1-hexadecanoyl-2-(5Z,8Z,11Z,14Z-eicosatetraenoyl)-sn-glycero-3-phosphocholine + N-(acetyl)-sphing-4-enine = 1-hexadecanoyl-N-(acetyl)-sphing-4-enine + 2-(5Z,8Z,11Z,14Z)-eicosatetraenoyl-sn-glycero-3-phosphocholine. The enzyme catalyses 1-hexadecanoyl-2-(4Z,7Z,10Z,13Z,16Z,19Z-docosahexaenoyl)-sn-glycero-3-phosphocholine + N-(acetyl)-sphing-4-enine = 2-(4Z,7Z,10Z,13Z,16Z,19Z-docosahexaenoyl)-sn-glycero-3-phosphocholine + 1-hexadecanoyl-N-(acetyl)-sphing-4-enine. It carries out the reaction 1-hexadecanoyl-2-nonadioyl-sn-glycero-3-phosphocholine + N-(acetyl)-sphing-4-enine = 2-nonadioyl-sn-glycero-3-phosphocholine + 1-hexadecanoyl-N-(acetyl)-sphing-4-enine. It catalyses the reaction 1-octadecanoyl-2-(9Z-octadecenoyl)-sn-glycero-3-phosphocholine + N-(acetyl)-sphing-4-enine = 1-octadecanoyl-N-(acetyl)-sphing-4-enine + 2-(9Z-octadecenoyl)-sn-glycero-3-phosphocholine. The catalysed reaction is 1-octadecanoyl-2-(5Z,8Z,11Z,14Z-eicosatetraenoyl)-sn-glycero-3-phosphocholine + N-(acetyl)-sphing-4-enine = 1-octadecanoyl-N-(acetyl)-sphing-4-enine + 2-(5Z,8Z,11Z,14Z)-eicosatetraenoyl-sn-glycero-3-phosphocholine. The enzyme catalyses 1-(9Z-octadecenoyl)-2-hexadecanoyl-sn-glycero-3-phosphocholine + N-(acetyl)-sphing-4-enine = 1-(9Z-octadecenoyl)-N-(acetyl)-sphing-4-enine + 2-hexadecanoyl-sn-glycero-3-phosphocholine. It carries out the reaction 1-(9Z)-octadecenoyl-2-octadecanoyl-sn-glycero-3-phosphocholine + N-(acetyl)-sphing-4-enine = 2-octadecanoyl-sn-glycero-3-phosphocholine + 1-(9Z-octadecenoyl)-N-(acetyl)-sphing-4-enine. It catalyses the reaction a 1,2-diacyl-sn-glycero-3-phospho-L-serine + N-(acetyl)-sphing-4-enine = a 2-acyl-sn-glycero-3-phospho-L-serine + 1-O-acyl-N-(acetyl)-sphing-4-enine. The catalysed reaction is 1-octadecanoyl-2-(9Z-octadecenoyl)-sn-glycero-3-phospho-L-serine + N-(acetyl)-sphing-4-enine = 2-(9Z-octadecenoyl)-sn-glycero-3-phospho-L-serine + 1-octadecanoyl-N-(acetyl)-sphing-4-enine. The enzyme catalyses a 1,2-diacyl-sn-glycero-3-phospho-L-serine + N-(acetyl)-sphing-4-enine = 1-O-acyl-N-(acetyl)-sphing-4-enine + a 1-acyl-sn-glycero-3-phospho-L-serine. It carries out the reaction 1-octadecanoyl-2-(9Z-octadecenoyl)-sn-glycero-3-phospho-L-serine + N-(acetyl)-sphing-4-enine = 1-octadecanoyl-sn-glycero-3-phosphoserine + 1-(9Z-octadecenoyl)-N-(acetyl)-sphing-4-enine. It catalyses the reaction a 1,2-diacyl-sn-glycero-3-phospho-(1'-sn-glycerol) + N-(acetyl)-sphing-4-enine = 2-acyl-sn-glycero-3-phospho-(1'-sn-glycerol) + 1-O-acyl-N-(acetyl)-sphing-4-enine. The catalysed reaction is 1-octadecanoyl-2-(9Z-octadecenoyl)-sn-glycero-3-phospho-(1'-sn-glycerol) + N-(acetyl)-sphing-4-enine = 2-(9Z-octadecenoyl)-sn-glycero-3-phospho-(1'-sn-glycerol) + 1-octadecanoyl-N-(acetyl)-sphing-4-enine. The enzyme catalyses a 1,2-diacyl-sn-glycero-3-phospho-(1'-sn-glycerol) + N-(acetyl)-sphing-4-enine = 1-O-acyl-N-(acetyl)-sphing-4-enine + 1-acyl-sn-glycero-3-phospho-(1'-sn-glycerol). It carries out the reaction 1-octadecanoyl-2-(9Z-octadecenoyl)-sn-glycero-3-phospho-(1'-sn-glycerol) + N-(acetyl)-sphing-4-enine = 1-octadecanoyl-sn-glycero-3-phospho-(1'-sn-glycerol) + 1-(9Z-octadecenoyl)-N-(acetyl)-sphing-4-enine. It catalyses the reaction an N-acylethanolamine + a 1,2-diacyl-sn-glycero-3-phosphocholine = 2-(acylamino)ethyl fatty acid + a 2-acyl-sn-glycero-3-phosphocholine. The catalysed reaction is an N-acylethanolamine + a 1,2-diacyl-sn-glycero-3-phosphocholine = 2-(acylamino)ethyl fatty acid + a 1-acyl-sn-glycero-3-phosphocholine. The enzyme catalyses N-(5Z,8Z,11Z,14Z-eicosatetraenoyl)-ethanolamine + 1,2-di-(9Z-octadecenoyl)-sn-glycero-3-phosphocholine = 2-[(5Z,8Z,11Z,14Z)-eicosatetraenoylamino]ethyl (9Z)-octadecenoate + (9Z-octadecenoyl)-sn-glycero-3-phosphocholine. It carries out the reaction N-(9Z-octadecenoyl) ethanolamine + 1,2-di-(9Z-octadecenoyl)-sn-glycero-3-phosphocholine = 2-[(9Z)-octadecenoylamino]ethyl (9Z)-octadecenoate + (9Z-octadecenoyl)-sn-glycero-3-phosphocholine. It catalyses the reaction a 3-acyl-sn-glycerol + a 1,2-diacyl-sn-glycero-3-phosphocholine = a 1,3-diacylglycerol + a 1-acyl-sn-glycero-3-phosphocholine. The catalysed reaction is a 3-acyl-sn-glycerol + a 1,2-diacyl-sn-glycero-3-phosphocholine = a 1,3-diacylglycerol + a 2-acyl-sn-glycero-3-phosphocholine. The enzyme catalyses 3-(9Z-octadecenoyl)-sn-glycerol + 1,2-di-(9Z-octadecenoyl)-sn-glycero-3-phosphocholine = 1,3-di-(9Z-octadecenoyl)-glycerol + (9Z-octadecenoyl)-sn-glycero-3-phosphocholine. It carries out the reaction 3-hexadecanoyl-sn-glycerol + 1,2-di-(9Z-octadecenoyl)-sn-glycero-3-phosphocholine = 1-(9Z)-octadecenoyl-3-hexadecanoyl-sn-glycerol + (9Z-octadecenoyl)-sn-glycero-3-phosphocholine. It catalyses the reaction a 1-acyl-sn-glycerol + a 1,2-diacyl-sn-glycero-3-phosphocholine = a 1,3-diacylglycerol + a 2-acyl-sn-glycero-3-phosphocholine. The catalysed reaction is a 1-acyl-sn-glycerol + a 1,2-diacyl-sn-glycero-3-phosphocholine = a 1,3-diacylglycerol + a 1-acyl-sn-glycero-3-phosphocholine. The enzyme catalyses 1-(9Z-octadecenoyl)-sn-glycerol + 1,2-di-(9Z-octadecenoyl)-sn-glycero-3-phosphocholine = 1,3-di-(9Z-octadecenoyl)-glycerol + (9Z-octadecenoyl)-sn-glycero-3-phosphocholine. It carries out the reaction 1-hexadecanoyl-sn-glycerol + 1,2-di-(9Z-octadecenoyl)-sn-glycero-3-phosphocholine = 1-hexadecanoyl-3-(9Z)-octadecenoyl-sn-glycerol + (9Z-octadecenoyl)-sn-glycero-3-phosphocholine. It catalyses the reaction a 2-acylglycerol + a 1,2-diacyl-sn-glycero-3-phosphocholine = a 1,2-diacylglycerol + a 2-acyl-sn-glycero-3-phosphocholine. The catalysed reaction is a 2-acylglycerol + a 1,2-diacyl-sn-glycero-3-phosphocholine = a 1,2-diacylglycerol + a 1-acyl-sn-glycero-3-phosphocholine. The enzyme catalyses 2-hexadecanoylglycerol + 1,2-di-(9Z-octadecenoyl)-sn-glycero-3-phosphocholine = 1-(9Z)-octadecenoyl-2-hexadecanoylglycerol + (9Z-octadecenoyl)-sn-glycero-3-phosphocholine. It carries out the reaction 1-O-alkylglycerol + a 1,2-diacyl-sn-glycero-3-phosphocholine = 1-O-alkyl-3-acylglycerol + a 1-acyl-sn-glycero-3-phosphocholine. It catalyses the reaction 1-O-alkylglycerol + a 1,2-diacyl-sn-glycero-3-phosphocholine = 1-O-alkyl-3-acylglycerol + a 2-acyl-sn-glycero-3-phosphocholine. The catalysed reaction is 1-O-hexadecylglycerol + 1,2-di-(9Z-octadecenoyl)-sn-glycero-3-phosphocholine = 1-O-hexadecyl-3-(9Z)-octadecenoylglycerol + (9Z-octadecenoyl)-sn-glycero-3-phosphocholine. The enzyme catalyses 1-O-alkyl-2-acyl-sn-glycerol + a 1,2-diacyl-sn-glycero-3-phosphocholine = 1-O-alkyl-2,3-diacyl-sn-glycerol + a 2-acyl-sn-glycero-3-phosphocholine. It carries out the reaction 1-O-alkyl-2-acyl-sn-glycerol + a 1,2-diacyl-sn-glycero-3-phosphocholine = 1-O-alkyl-2,3-diacyl-sn-glycerol + a 1-acyl-sn-glycero-3-phosphocholine. It catalyses the reaction 1-O-hexadecyl-2-acetyl-sn-glycerol + 1,2-di-(9Z-octadecenoyl)-sn-glycero-3-phosphocholine = 1-O-hexadecyl-2-acetyl-3-(9Z)-octadecenoyl-sn-glycerol + (9Z-octadecenoyl)-sn-glycero-3-phosphocholine. The catalysed reaction is 1-O-hexadecyl-2-O-methyl-sn-glycerol + 1,2-di-(9Z-octadecenoyl)-sn-glycero-3-phosphocholine = 1-O-hexadecyl-2-O-methyl-3-(9Z)-octadecenoyl-sn-glycerol + (9Z-octadecenoyl)-sn-glycero-3-phosphocholine. The enzyme catalyses a 1,2-diacyl-sn-glycero-3-phosphoethanolamine + H2O = a 1-acyl-sn-glycero-3-phosphoethanolamine + a fatty acid + H(+). It carries out the reaction 1-acyl-2-(5Z,8Z,11Z,14Z)-eicosatetraenoyl-sn-glycero-3-phosphoethanolamine + H2O = a 1-acyl-sn-glycero-3-phosphoethanolamine + (5Z,8Z,11Z,14Z)-eicosatetraenoate + H(+). It catalyses the reaction a 1,2-diacyl-sn-glycero-3-phospho-(1'-sn-glycerol) + H2O = 1-acyl-sn-glycero-3-phospho-(1'-sn-glycerol) + a fatty acid + H(+). The catalysed reaction is 1-hexadecanoyl-2-(9Z-octadecenoyl)-sn-glycero-3-phospho-(1'-sn-glycerol) + H2O = 1-hexadecanoyl-sn-glycero-3-phospho-(1'-sn-glycerol) + (9Z)-octadecenoate + H(+). The enzyme catalyses a 1,2-diacyl-sn-glycero-3-phospho-(1'-sn-glycerol) + H2O = 2-acyl-sn-glycero-3-phospho-(1'-sn-glycerol) + a fatty acid + H(+). It carries out the reaction 1-hexadecanoyl-2-(9Z-octadecenoyl)-sn-glycero-3-phospho-(1'-sn-glycerol) + H2O = 2-(9Z-octadecenoyl)-sn-glycero-3-phospho-(1'-sn-glycerol) + hexadecanoate + H(+). With respect to regulation, inhibited by zinc ions at neutral pH. Zinc ions in plasma may keep the enzyme from hydrolyzing inappropriate substrates. Functionally, has dual calcium-independent phospholipase and O-acyltransferase activities with a potential role in glycerophospholipid homeostasis and remodeling of acyl groups of lipophilic alcohols present in acidic cellular compartments. Catalyzes hydrolysis of the ester bond of the fatty acyl group attached at sn-1 or sn-2 position of phospholipids (phospholipase A1 or A2 activity) and transfer it to the hydroxyl group at the first carbon of lipophilic alcohols (O-acyltransferase activity). Among preferred fatty acyl donors are phosphatidylcholines, phosphatidylethanolamines, phosphatidylglycerols and phosphatidylserines. Favors sn-2 over sn-1 deacylation of unsaturated fatty acyl groups of phosphatidylcholines, phosphatidylethanolamines, and phosphatidylglycerols. Among preferred fatty acyl acceptors are natural lipophilic alcohols including short-chain ceramide N-acetyl-sphingosine (C2 ceramide), alkylacylglycerols, monoacylglycerols, and acylethanolamides such as anandamide and oleoylethanolamide. Selectively hydrolyzes the sn-1 fatty acyl group of truncated oxidized phospholipids and may play a role in detoxification of reactive oxidized phospholipids during oxidative stress. Required for normal phospholipid degradation in alveolar macrophages with potential implications in the clearance of pulmonary surfactant, which is mainly composed of dipalmitoylphosphatidylcholine (1,2-dihexadecanoyl-sn-glycero-3-phosphocholine). Involved in the first step of bis(monoacylglycero)phosphate (BMP) de novo synthesis from phosphatidylglycerol (1,2-diacyl-sn-glycero-3-phospho-(1'-sn-glycerol), PG). BMP is an important player in cargo sorting and degradation, regulation of cellular cholesterol levels and intercellular communication. At neutral pH, hydrolyzes the sn-1 fatty acyl group of the lysophosphatidylcholines. This Homo sapiens (Human) protein is Lysosomal phospholipase A and acyltransferase.